A 505-amino-acid polypeptide reads, in one-letter code: MPRSYKEECSFLERLSDSAFLIKKGFVPNMKVEGKFYINEHLEKLMFDELRHWCGAQGIGGFLPGVKQIANVAALPGIVGYSVGLPDVHSGYGFAIGNMAAFDMSLPEAVVSPGGVGFDINCGVRLLRTNLEEKDVQPVKERLAQSLFDHIPVGVGSKGVIPMGAKDLEDALEMGVDWSLREGYAWAEDKEHCEEYGRMLQADSAKVSAKAKKRGLPQLGTLGAGNHYAEIQVVDEIYNEFAAKKMGIDHKGQVCVMIHSGSRGLGHQVATDALVAMEKAMKRDKIEVNDRQLACAHIKSPEGQDYLKGMAGAANYAWVNRSSMTFLTRQAFAKVFNSTPDDLDMHLIYDVSHNIAKVEEHFLDGRQRQLLVHRKGSTRAFPPHHPLIPVDYQLTGQPVLIGGTMGTCSYVLTGTEKGMTETFGTTCHGAGRALSRAKSRRNLDYQDVLENLAQKGISIRVASPKLVMEEAPESYKNVTDVVDTCHSAGISKKAIKLRPIAVIKG.

Positions 119, 122, 227, 259, and 353 each coordinate Mn(2+). 226–230 contributes to the GMP binding site; that stretch reads NHYAE. Residues 353 to 354, 402 to 405, serine 409, 428 to 431, and lysine 504 each bind GMP; these read HN, GGTM, and HGAG. Histidine 428 functions as the GMP-histidine intermediate in the catalytic mechanism.

The protein belongs to the RtcB family. In terms of assembly, catalytic component of the tRNA-splicing ligase complex. Requires Mn(2+) as cofactor.

It carries out the reaction a 3'-end 3'-phospho-ribonucleotide-RNA + a 5'-end dephospho-ribonucleoside-RNA + GTP = a ribonucleotidyl-ribonucleotide-RNA + GMP + diphosphate. The catalysed reaction is a 3'-end 2',3'-cyclophospho-ribonucleotide-RNA + a 5'-end dephospho-ribonucleoside-RNA + GTP + H2O = a ribonucleotidyl-ribonucleotide-RNA + GMP + diphosphate + H(+). Catalytic subunit of the tRNA-splicing ligase complex that acts by directly joining spliced tRNA halves to mature-sized tRNAs by incorporating the precursor-derived splice junction phosphate into the mature tRNA as a canonical 3',5'-phosphodiester. May act as an RNA ligase with broad substrate specificity, and may function toward other RNAs. The sequence is that of RNA-splicing ligase RtcB homolog from Nematostella vectensis (Starlet sea anemone).